Consider the following 37-residue polypeptide: uncharacterized protein (37 aa).

This is an uncharacterized protein from Saccharomyces cerevisiae (strain ATCC 204508 / S288c) (Baker's yeast).